A 319-amino-acid polypeptide reads, in one-letter code: Chromoplast-specific carotenoid-associated protein C1, chromoplastic (319 aa).

Residues 1–55 (MTSIAFWNAFTVNPFPAAARRSPPPLTPFTSGALSPARKPRILEISHPRTLPSFR) constitute a chromoplast transit peptide.

This sequence belongs to the PAP/fibrillin family. In terms of tissue distribution, expressed in flower buds and floral lip tissues. Not detected in roots and leaves. Specifically expressed in conical papillate cells of adaxial epidermis of lip tissues.

The protein resides in the plastid. The protein localises to the chromoplast. Its function is as follows. May be involved in carotenoid sequestration within chromoplasts. The protein is Chromoplast-specific carotenoid-associated protein C1, chromoplastic (CHRC1) of Oncidium hybrid cultivar (Orchid).